Consider the following 329-residue polypeptide: MTLRNDWTREEIQALYEQPFLDLVFKAQQVHREHFTANTIQVSTLLSIKTGKCPEDCKYCSQSAHYDSKLEAEKRIAVEKVISEAKAAKDSGSSRFCMGAAWRNPHERDMPYVLEMVREVKALGMETCMTLGMLNQSQAERLKDAGLDYYNHNLDTSREYYSHIISTRTFDDRLNTLDYVRQAGMKVCSGGIVGLGESREDRIGLLHELATLPIHPESVPINMLVPIEGTPLADVEKLDVIEWIRTIAVARIIMPHSYIRLSAGRESLSDSDQALAFMAGANSLFSGDKLLTTPNAGEGKDQALFNKLGLTAEKPKPTVSDLSVDAMSA.

The region spanning 38 to 262 (NTIQVSTLLS…IMPHSYIRLS (225 aa)) is the Radical SAM core domain. [4Fe-4S] cluster is bound by residues C53, C57, and C60. Residues C97, C128, C188, and R260 each contribute to the [2Fe-2S] cluster site.

It belongs to the radical SAM superfamily. Biotin synthase family. In terms of assembly, homodimer. It depends on [4Fe-4S] cluster as a cofactor. [2Fe-2S] cluster is required as a cofactor.

The enzyme catalyses (4R,5S)-dethiobiotin + (sulfur carrier)-SH + 2 reduced [2Fe-2S]-[ferredoxin] + 2 S-adenosyl-L-methionine = (sulfur carrier)-H + biotin + 2 5'-deoxyadenosine + 2 L-methionine + 2 oxidized [2Fe-2S]-[ferredoxin]. Its pathway is cofactor biosynthesis; biotin biosynthesis; biotin from 7,8-diaminononanoate: step 2/2. In terms of biological role, catalyzes the conversion of dethiobiotin (DTB) to biotin by the insertion of a sulfur atom into dethiobiotin via a radical-based mechanism. The polypeptide is Biotin synthase (Acinetobacter baumannii (strain ACICU)).